Here is a 537-residue protein sequence, read N- to C-terminus: CTP synthase (537 aa).

Residues 1 to 269 are amidoligase domain; the sequence is MNQTKYIFVT…DKVALKKLDL (269 aa). Ser15 provides a ligand contact to CTP. Ser15 serves as a coordination point for UTP. 16-21 is a binding site for ATP; that stretch reads SLGKGI. Tyr56 contacts L-glutamine. Position 73 (Asp73) interacts with ATP. Residues Asp73 and Glu143 each coordinate Mg(2+). CTP contacts are provided by residues 150 to 152, 190 to 195, and Lys226; these read DIE and KTKPTQ. UTP contacts are provided by residues 190 to 195 and Lys226; that span reads KTKPTQ. In terms of domain architecture, Glutamine amidotransferase type-1 spans 295–537; sequence SIGLVGKYVE…IAAAVKHKNK (243 aa). Position 357 (Gly357) interacts with L-glutamine. The active-site Nucleophile; for glutamine hydrolysis is the Cys384. L-glutamine contacts are provided by residues 385–388, Glu408, and Arg465; that span reads LGMQ. Active-site residues include His510 and Glu512.

It belongs to the CTP synthase family. As to quaternary structure, homotetramer.

The catalysed reaction is UTP + L-glutamine + ATP + H2O = CTP + L-glutamate + ADP + phosphate + 2 H(+). It catalyses the reaction L-glutamine + H2O = L-glutamate + NH4(+). It carries out the reaction UTP + NH4(+) + ATP = CTP + ADP + phosphate + 2 H(+). It participates in pyrimidine metabolism; CTP biosynthesis via de novo pathway; CTP from UDP: step 2/2. Allosterically activated by GTP, when glutamine is the substrate; GTP has no effect on the reaction when ammonia is the substrate. The allosteric effector GTP functions by stabilizing the protein conformation that binds the tetrahedral intermediate(s) formed during glutamine hydrolysis. Inhibited by the product CTP, via allosteric rather than competitive inhibition. In terms of biological role, catalyzes the ATP-dependent amination of UTP to CTP with either L-glutamine or ammonia as the source of nitrogen. Regulates intracellular CTP levels through interactions with the four ribonucleotide triphosphates. This chain is CTP synthase, found in Flavobacterium psychrophilum (strain ATCC 49511 / DSM 21280 / CIP 103535 / JIP02/86).